A 284-amino-acid polypeptide reads, in one-letter code: 2-dehydro-3-deoxyphosphooctonate aldolase (284 aa).

Belongs to the KdsA family.

The protein resides in the cytoplasm. The catalysed reaction is D-arabinose 5-phosphate + phosphoenolpyruvate + H2O = 3-deoxy-alpha-D-manno-2-octulosonate-8-phosphate + phosphate. The protein operates within carbohydrate biosynthesis; 3-deoxy-D-manno-octulosonate biosynthesis; 3-deoxy-D-manno-octulosonate from D-ribulose 5-phosphate: step 2/3. It participates in bacterial outer membrane biogenesis; lipopolysaccharide biosynthesis. This chain is 2-dehydro-3-deoxyphosphooctonate aldolase, found in Burkholderia mallei (strain NCTC 10247).